Here is a 500-residue protein sequence, read N- to C-terminus: Cytochrome P450 71B26 (500 aa).

A helical transmembrane segment spans residues 1-21 (MDSIWILSLLFFIIFLLLAAF). Cysteine 440 is a heme binding site.

This sequence belongs to the cytochrome P450 family. Heme serves as cofactor.

It is found in the membrane. This Arabidopsis thaliana (Mouse-ear cress) protein is Cytochrome P450 71B26 (CYP71B26).